The following is a 243-amino-acid chain: Cyclin-dependent kinase 20 (243 aa).

The Protein kinase domain occupies 4–243; it reads YCILGRIGEG…IHLSCRFLSV (240 aa). ATP contacts are provided by residues 10 to 18 and K33; that span reads IGEGAHGIV. The active-site Proton acceptor is D127.

It belongs to the protein kinase superfamily. CMGC Ser/Thr protein kinase family. CDC2/CDKX subfamily. Monomer. Interacts with TBC1D32 and MAK.

The protein resides in the nucleus. The protein localises to the cytoplasm. It localises to the cell projection. It is found in the cilium. The enzyme catalyses L-seryl-[protein] + ATP = O-phospho-L-seryl-[protein] + ADP + H(+). The catalysed reaction is L-threonyl-[protein] + ATP = O-phospho-L-threonyl-[protein] + ADP + H(+). Functionally, required for high-level Shh responses in the developing neural tube. Together with TBC1D32, controls the structure of the primary cilium by coordinating assembly of the ciliary membrane and axoneme, allowing GLI2 to be properly activated in response to SHH signaling. Involved in cell growth. Activates CDK2, a kinase involved in the control of the cell cycle, by phosphorylating residue 'Thr-160'. The chain is Cyclin-dependent kinase 20 (CDK20) from Macaca mulatta (Rhesus macaque).